The primary structure comprises 192 residues: Group XIIA secretory phospholipase A2 (192 aa).

Positions 1–25 are cleaved as a signal peptide; sequence MVTPRPAPARSPALLLLLLLATARG. Residues G91, P93, and F95 each contribute to the Ca(2+) site. H113 is an active-site residue. Ca(2+) is bound at residue D114. D128 is a catalytic residue.

The protein belongs to the phospholipase A2 family. Ca(2+) serves as cofactor.

It localises to the secreted. The protein localises to the cytoplasm. It catalyses the reaction a 1,2-diacyl-sn-glycero-3-phosphocholine + H2O = a 1-acyl-sn-glycero-3-phosphocholine + a fatty acid + H(+). In terms of biological role, PA2 catalyzes the calcium-dependent hydrolysis of the 2-acyl groups in 3-sn-phosphoglycerides. Does not exhibit detectable activity toward sn-2-arachidonoyl- or linoleoyl-phosphatidylcholine or -phosphatidylethanolamine. This chain is Group XIIA secretory phospholipase A2 (Pla2g12a), found in Mus musculus (Mouse).